A 379-amino-acid chain; its full sequence is MGAFFPVILLTPTPISSAHNLYLFQMLELQENITDSQPMDPPSLEIMMLHHLMIILVTLFGNTLLIYVIYKNNAVLRRKRVTPVQMLMLHMCAADILFALISVGPTMAITATVPFFYGPNLLCKLTKFLQVIPMYASSFLLVAISADRYQAICRPLASMKSSIYNRPALYSGIAWTAAILFSTPQLYLFEKRNGDCSENYTTALQYQLYVCLFNSVVWLLPSAIAGWLYLCVCKAVWKSTSFSSSLRNNMKKMEHMKLTEKNGGMQAHHKGATMQCVELDRRRVQTVKLTLTIVAANFVLWAPFCITSVIDAVWPTAINSTFATYIMFFGNLNSCMNPWLWFHFNRKQLKRACPCRKSSEPLIQSLVYVHVMTSEQSDF.

Over 19 to 48 the chain is Extracellular; sequence HNLYLFQMLELQENITDSQPMDPPSLEIMM. N32 is a glycosylation site (N-linked (GlcNAc...) asparagine). Residues 49-69 traverse the membrane as a helical segment; sequence LHHLMIILVTLFGNTLLIYVI. Residues 70-95 lie on the Cytoplasmic side of the membrane; it reads YKNNAVLRRKRVTPVQMLMLHMCAAD. A helical transmembrane segment spans residues 96-116; it reads ILFALISVGPTMAITATVPFF. At 117–124 the chain is on the extracellular side; sequence YGPNLLCK. An intrachain disulfide couples C123 to C196. Residues 125–145 form a helical membrane-spanning segment; it reads LTKFLQVIPMYASSFLLVAIS. Residues 146–168 lie on the Cytoplasmic side of the membrane; it reads ADRYQAICRPLASMKSSIYNRPA. A helical transmembrane segment spans residues 169–189; sequence LYSGIAWTAAILFSTPQLYLF. Over 190–207 the chain is Extracellular; the sequence is EKRNGDCSENYTTALQYQ. A glycan (N-linked (GlcNAc...) asparagine) is linked at N199. The chain crosses the membrane as a helical span at residues 208 to 228; sequence LYVCLFNSVVWLLPSAIAGWL. Residues 229–289 lie on the Cytoplasmic side of the membrane; sequence YLCVCKAVWK…DRRRVQTVKL (61 aa). The chain crosses the membrane as a helical span at residues 290–310; sequence TLTIVAANFVLWAPFCITSVI. Residues 311-320 are Extracellular-facing; it reads DAVWPTAINS. A glycan (N-linked (GlcNAc...) asparagine) is linked at N319. The helical transmembrane segment at 321–343 threads the bilayer; it reads TFATYIMFFGNLNSCMNPWLWFH. Residues 344–379 lie on the Cytoplasmic side of the membrane; it reads FNRKQLKRACPCRKSSEPLIQSLVYVHVMTSEQSDF.

Belongs to the G-protein coupled receptor 1 family. Vasopressin/oxytocin receptor subfamily. As to expression, detected in the left ASE gustatory neuron, the chemosensory neuron pairs ASH and ADF, and the PQR tail neuron. In males, detected in hook and tail sensory neurons involved in vulval sensing and hermaphrodite contact, and in spicule protractor muscles.

Its subcellular location is the cell membrane. In terms of biological role, receptor for nematocin. The activity of this receptor is mediated by G proteins which activate a phosphatidylinositol-calcium second messenger system. The activity of this receptor may be modulated by ntr-2, leading to reduced intracellular cAMP production. Plays a role in gustatory associative learning. Also plays a role in male mating behavior. The sequence is that of Nematocin receptor 1 from Caenorhabditis elegans.